The chain runs to 312 residues: Malate dehydrogenase (312 aa).

Residues 12 to 17 and D36 contribute to the NAD(+) site; that span reads GAGFTG. Residues R87 and R93 each coordinate substrate. NAD(+) contacts are provided by residues N100 and 123 to 125; that span reads LTN. Position 125 (N125) interacts with substrate. Phosphoserine is present on S149. R156 contacts substrate. H180 (proton acceptor) is an active-site residue.

The protein belongs to the LDH/MDH superfamily. MDH type 3 family.

The enzyme catalyses (S)-malate + NAD(+) = oxaloacetate + NADH + H(+). Its function is as follows. Catalyzes the reversible oxidation of malate to oxaloacetate. This Bacillus cytotoxicus (strain DSM 22905 / CIP 110041 / 391-98 / NVH 391-98) protein is Malate dehydrogenase.